A 720-amino-acid polypeptide reads, in one-letter code: Inactive serine protease PAMR1 (720 aa).

The signal sequence occupies residues 1–21 (MELGCWTQLGLTFLQLLLISS). Cystine bridges form between C128–C150, C177–C199, C239–C250, C244–C260, C262–C271, C280–C329, C315–C342, and C414–C442. Positions 128–236 (CGQVLRAPKG…DGFHAIFEEI (109 aa)) constitute a CUB domain. An EGF-like domain is found at 235 to 272 (EITACSSSPCFHDGTCVLDKAGSYKCACLAGYTGQRCE). 2 Sushi domains span residues 278-344 (RNCS…ICIK) and 387-444 (APTK…SCIP). Positions 445–720 (ICGKIENVTA…FKDWIERNMK (276 aa)) constitute a Peptidase S1 domain. An N-linked (GlcNAc...) asparagine glycan is attached at N451. Cysteines 489 and 505 form a disulfide. A glycan (N-linked (GlcNAc...) asparagine) is linked at N614. 2 cysteine pairs are disulfide-bonded: C630-C649 and C661-C697.

It belongs to the peptidase S1 family.

It is found in the secreted. In terms of biological role, may play a role in regeneration of skeletal muscle. The polypeptide is Inactive serine protease PAMR1 (PAMR1) (Pongo abelii (Sumatran orangutan)).